The chain runs to 492 residues: N-succinylglutamate 5-semialdehyde dehydrogenase (492 aa).

220 to 225 (GRANTG) is an NAD(+) binding site. Active-site residues include glutamate 243 and cysteine 277.

The protein belongs to the aldehyde dehydrogenase family. AstD subfamily.

It carries out the reaction N-succinyl-L-glutamate 5-semialdehyde + NAD(+) + H2O = N-succinyl-L-glutamate + NADH + 2 H(+). The protein operates within amino-acid degradation; L-arginine degradation via AST pathway; L-glutamate and succinate from L-arginine: step 4/5. In terms of biological role, catalyzes the NAD-dependent reduction of succinylglutamate semialdehyde into succinylglutamate. This chain is N-succinylglutamate 5-semialdehyde dehydrogenase, found in Shigella boydii serotype 4 (strain Sb227).